The following is a 232-amino-acid chain: Dehydrin DHN3 (232 aa).

The span at 1 to 14 (MSQYQNQYGAQTGM) shows a compositional bias: polar residues. Disordered stretches follow at residues 1-66 (MSQY…QHRG) and 140-232 (EHHG…CTGH). Gly residues predominate over residues 49-60 (TTGGATGQGHGH). A compositionally biased stretch (basic and acidic residues) spans 140-157 (EHHGDKKGVMDKIKEKIP). A compositionally biased stretch (polar residues) spans 159–168 (TEQSRTNTDG). A compositionally biased stretch (basic and acidic residues) spans 198 to 223 (EQQDVHHGDEQHGEKKGIMEKIKEKL).

This sequence belongs to the plant dehydrin family.

In Pisum sativum (Garden pea), this protein is Dehydrin DHN3 (DHN3).